Here is a 970-residue protein sequence, read N- to C-terminus: Disease resistance protein RGA2 (970 aa).

The NB-ARC domain occupies 135–438 (RQAVRRETGS…MAHGFLLSKG (304 aa)). Position 182 to 189 (182 to 189 (GMGGLGKT)) interacts with ATP. LRR repeat units lie at residues 525 to 548 (FISL…IGDL), 550 to 571 (HLRY…LCKL), 573 to 594 (NLQT…ETSK), 595 to 619 (LGSL…IGSL), 638 to 662 (LGEL…KNDK), 672 to 697 (KGNL…EVKV), 752 to 777 (LPCL…DIDV), 787 to 811 (FPSL…EGEE), 813 to 832 (FPVL…LSSN), 833 to 857 (LRAL…MFKN), 859 to 882 (ANLK…LASL), 884 to 906 (ALKS…GLEG), 907 to 931 (LSSL…LQHL), and 946 to 970 (IKRC…NIYI).

Belongs to the disease resistance NB-LRR family.

In terms of biological role, disease resistance protein. Resistance proteins guard the plant against pathogens that contain an appropriate avirulence protein via a direct or indirect interaction with this avirulence protein. That triggers a defense system which restricts the pathogen growth. Confers a broad resistance to all known races of P.infestans. The chain is Disease resistance protein RGA2 (RGA2) from Solanum bulbocastanum (Wild potato).